Here is a 485-residue protein sequence, read N- to C-terminus: GlcNAc-binding protein A (485 aa).

Positions 1–23 (MKKQPKMTAIALILSGISGLAYG) are cleaved as a signal peptide. The 178-residue stretch at 24 to 201 (HGYVSAVENG…SFYNVIDVKF (178 aa)) folds into the Chitin-binding type-4 domain. Positions 437-478 (AGTKVLASDGAIYQCKPWPYSGYCQQWTSNATQYQPGTGSHW) constitute a Chitin-binding type-3 domain.

It belongs to the GbpA family.

It localises to the secreted. Functionally, probably interacts with GlcNAc residues. May promote attachment to both epithelial cell surfaces and chitin. This chain is GlcNAc-binding protein A, found in Vibrio cholerae serotype O1 (strain ATCC 39541 / Classical Ogawa 395 / O395).